A 305-amino-acid polypeptide reads, in one-letter code: tRNA dimethylallyltransferase (305 aa).

11 to 18 (GPTAVGKT) is an ATP binding site. Substrate is bound at residue 13–18 (TAVGKT). An interaction with substrate tRNA region spans residues 36-39 (DSMQ).

It belongs to the IPP transferase family. As to quaternary structure, monomer. Requires Mg(2+) as cofactor.

It carries out the reaction adenosine(37) in tRNA + dimethylallyl diphosphate = N(6)-dimethylallyladenosine(37) in tRNA + diphosphate. Its function is as follows. Catalyzes the transfer of a dimethylallyl group onto the adenine at position 37 in tRNAs that read codons beginning with uridine, leading to the formation of N6-(dimethylallyl)adenosine (i(6)A). In Listeria monocytogenes serovar 1/2a (strain ATCC BAA-679 / EGD-e), this protein is tRNA dimethylallyltransferase.